A 118-amino-acid chain; its full sequence is Iron-sulfur cluster assembly protein CyaY (118 aa).

Belongs to the frataxin family.

Functionally, involved in iron-sulfur (Fe-S) cluster assembly. May act as a regulator of Fe-S biogenesis. The chain is Iron-sulfur cluster assembly protein CyaY from Buchnera aphidicola subsp. Baizongia pistaciae (strain Bp).